A 363-amino-acid polypeptide reads, in one-letter code: MRDETPEQPAPLRFGYTTGSCASATSLAAARLLLTGVASDTVDIVLPKGQHVAMRLAFCRATDDGGAEAGTIKDAGDDPDVTHGALVFARVRLVHEPGVRFRAGPGVGTVTRAGLPIAVGEPAINPVPRRMMTEHLAALAAEHGYAGGFDVAIGVENGEALARKTMNPRLGIVGGLSILGTTGIVRPFSCSAYIASIHQGIDVARANGVTHIAACTGNASEDAVRARYGLPDIALIEMGDFAGAVLKYLRRASVARLTLCGGFGKLSKLAAGHLDLHSRHSSIDLPLLAEWAGEAGASAVLQHEIRAANTSQQALALALAHHVPLGDVVCAHARRVARDIVPGEVDVETLAIDREGRIVGVVP.

Belongs to the CbiD family.

It carries out the reaction Co-precorrin-5B + S-adenosyl-L-methionine = Co-precorrin-6A + S-adenosyl-L-homocysteine. It functions in the pathway cofactor biosynthesis; adenosylcobalamin biosynthesis; cob(II)yrinate a,c-diamide from sirohydrochlorin (anaerobic route): step 6/10. Functionally, catalyzes the methylation of C-1 in cobalt-precorrin-5B to form cobalt-precorrin-6A. This Burkholderia mallei (strain ATCC 23344) protein is Cobalt-precorrin-5B C(1)-methyltransferase.